The following is an 881-amino-acid chain: Valine--tRNA ligase (881 aa).

A 'HIGH' region motif is present at residues 49–59 (PNVTGKLHLGH). Residues 526–530 (KMSKS) carry the 'KMSKS' region motif. Residue Lys529 participates in ATP binding. Residues 810–881 (LADLINLDEE…VRQRLADLEK (72 aa)) adopt a coiled-coil conformation.

Belongs to the class-I aminoacyl-tRNA synthetase family. ValS type 1 subfamily. Monomer.

It is found in the cytoplasm. The enzyme catalyses tRNA(Val) + L-valine + ATP = L-valyl-tRNA(Val) + AMP + diphosphate. Catalyzes the attachment of valine to tRNA(Val). As ValRS can inadvertently accommodate and process structurally similar amino acids such as threonine, to avoid such errors, it has a 'posttransfer' editing activity that hydrolyzes mischarged Thr-tRNA(Val) in a tRNA-dependent manner. This is Valine--tRNA ligase from Bacillus cereus (strain ATCC 14579 / DSM 31 / CCUG 7414 / JCM 2152 / NBRC 15305 / NCIMB 9373 / NCTC 2599 / NRRL B-3711).